The following is a 171-amino-acid chain: METHKHGPSLAWWSLLLLLLGLLMPPAIAQDLTYREAVLRAVDAFNQQSSEANLYRLLSMDPQQLEDAKPYTPQPVSFTVKETECPRTTWKLPEQCDFKEDGLVKRCVGTVTRYQAWDSFDIRCNRAQESPEPTGLRKRLRKFRNKIKEKLKKIGQKIQGFVPKLAPRTDY.

Positions 1-29 (METHKHGPSLAWWSLLLLLLGLLMPPAIA) are cleaved as a signal peptide. 2 disulfides stabilise this stretch: cysteine 85-cysteine 96 and cysteine 107-cysteine 124.

The protein belongs to the cathelicidin family. As to expression, neutrophils.

Its subcellular location is the secreted. Its function is as follows. CAP18 binds to the lipid A moiety of bacterial lipopolysaccharides (LPS), a glycolipid present in the outer membrane of all Gram-negative bacteria. Has antibiotic activity. The chain is Antimicrobial protein CAP18 (CAP18) from Oryctolagus cuniculus (Rabbit).